A 244-amino-acid polypeptide reads, in one-letter code: Carbonic anhydrase (244 aa).

A signal peptide spans 1–19 (MKGKLSIALMLSVCFSASA). In terms of domain architecture, Alpha-carbonic anhydrase spans 23–244 (VHWGYEGNGD…QPLNGRIIIH (222 aa)). Cys46 and Cys199 are oxidised to a cystine. The Proton acceptor role is filled by His84. Zn(2+) is bound by residues His109, His111, and His128. Substrate is bound at residue 195–196 (TT).

It belongs to the alpha-carbonic anhydrase family. It depends on Zn(2+) as a cofactor.

It localises to the periplasm. It carries out the reaction hydrogencarbonate + H(+) = CO2 + H2O. In terms of biological role, reversible hydration of carbon dioxide. The protein is Carbonic anhydrase (cah) of Pectobacterium carotovorum (Erwinia carotovora).